Here is a 391-residue protein sequence, read N- to C-terminus: 12-oxophytodienoate reductase 3 (391 aa).

Methionine 1 carries the post-translational modification N-acetylmethionine. An N-acetylthreonine; in 12-oxophytodienoate reductase 3, N-terminally processed modification is found at threonine 2. Residues 31–33, glycine 64, and glutamine 106 contribute to the FMN site; that span reads PMT. A substrate-binding site is contributed by histidine 186. Tyrosine 191 acts as the Proton donor in catalysis. Arginine 238 is a binding site for FMN. Arginine 284 contributes to the substrate binding site. Residues 320-322 and 343-344 contribute to the FMN site; these read SGG and GR. A Microbody targeting signal motif is present at residues 389–391; sequence SRL.

It belongs to the NADH:flavin oxidoreductase/NADH oxidase family. It depends on FMN as a cofactor. In terms of tissue distribution, expressed in green seedling, leaves, flowers (anthers, pistil, petal and stamen), and to a lower extent in roots and siliques. Specifically expressed in filament during anther dehiscence initiation.

The protein localises to the peroxisome. The enzyme catalyses (1S,2S)-OPC-8 + NADP(+) = (9S,13S,15Z)-12-oxophyto-10,15-dienoate + NADPH + H(+). It functions in the pathway lipid metabolism; oxylipin biosynthesis. In terms of biological role, specifically cleaves olefinic bonds in cyclic enones. Involved in the biosynthesis of jasmonic acid (JA) and perhaps in biosynthesis or metabolism of other oxylipin signaling moleclules. Required for the spatial and temporal regulation of JA levels during dehiscence of anthers, promoting the stomium degeneration program. In vitro, reduces 9S,13S-12-oxophytodienoic acid (9S,13S-OPDA) and 9R,13R-OPDA to 9S,13S-OPC-8:0 and 9R,13R-OPC-8:0, respectively. Can detoxify the explosive 2,4,6-trinitrotoluene (TNT) in vitro by catalyzing its nitroreduction to form hydroxylamino-dinitrotoluene (HADNT). This chain is 12-oxophytodienoate reductase 3, found in Arabidopsis thaliana (Mouse-ear cress).